A 662-amino-acid chain; its full sequence is 72 kDa type IV collagenase (662 aa).

The N-terminal stretch at 1 to 29 (MEARVAWGALAGPLRVLCVLCCLLGRAIA) is a signal peptide. The propeptide at 30 to 109 (APSPIIKFPG…PRCGNPDVAN (80 aa)) is activation peptide. Residues 100–107 (PRCGNPDV) carry the Cysteine switch motif. Cysteine 102 is a binding site for Zn(2+). Residues 110 to 221 (YNFFPRKPKW…LWTLGEGQVV (112 aa)) are collagenase-like 1. Positions 134 and 168 each coordinate Ca(2+). Positions 178 and 180 each coordinate Zn(2+). Ca(2+) contacts are provided by aspartate 185 and glycine 186. Residue histidine 193 participates in Zn(2+) binding. Residues glycine 200, glycine 202, and aspartate 204 each contribute to the Ca(2+) site. Histidine 206 serves as a coordination point for Zn(2+). Ca(2+) contacts are provided by aspartate 208, aspartate 209, and glutamate 211. Positions 222 to 396 (RVKYGNADGE…WGFCPDQGYS (175 aa)) are collagen-binding. Fibronectin type-II domains lie at 228 to 276 (ADGE…FCPH), 286 to 334 (ADGQ…FCPE), and 344 to 392 (SEGA…FCPD). 6 disulfides stabilise this stretch: cysteine 233-cysteine 259, cysteine 247-cysteine 274, cysteine 291-cysteine 317, cysteine 305-cysteine 332, cysteine 349-cysteine 375, and cysteine 363-cysteine 390. Residues 397–467 (LFLVAAHEFG…GPTPTLGPVT (71 aa)) form a collagenase-like 2 region. Histidine 403 is a Zn(2+) binding site. Glutamate 404 is a catalytic residue. Residues histidine 407 and histidine 413 each coordinate Zn(2+). The required for inhibitor TIMP2 binding stretch occupies residues 414–662 (SQDPGALMAP…GSIKSDWLGC (249 aa)). The tract at residues 446 to 465 (GPSPDADTDTGTGPTPTLGP) is disordered. A disulfide bridge links cysteine 471 with cysteine 662. Hemopexin repeat units lie at residues 474–518 (DIVF…WPEL), 519–565 (PEKI…GLPP), 567–615 (VQQV…WNAI), and 616–662 (PDNL…WLGC). 3 residues coordinate Ca(2+): aspartate 478, aspartate 523, and aspartate 571. N-linked (GlcNAc...) asparagine glycosylation is present at asparagine 575. Aspartate 620 provides a ligand contact to Ca(2+). The N-linked (GlcNAc...) asparagine glycan is linked to asparagine 644.

This sequence belongs to the peptidase M10A family. As to quaternary structure, interacts (via the C-terminal hemopexin-like domains-containing region) with the integrin alpha-V/beta-3; the interaction promotes vascular invasion in angiogenic vessels and melamoma cells. Interacts (via the C-terminal PEX domain) with TIMP2 (via the C-terminal); the interaction inhibits the degradation activity. Interacts with GSK3B. Ca(2+) is required as a cofactor. It depends on Zn(2+) as a cofactor. Post-translationally, phosphorylation on multiple sites modulates enzymatic activity. Phosphorylated by PKC in vitro. In terms of processing, the propeptide is processed by MMP14 (MT-MMP1) and MMP16 (MT-MMP3). Autocatalytic cleavage in the C-terminal produces the anti-angiogenic peptide, PEX. This processing appears to be facilitated by binding integrinv/beta3.

Its subcellular location is the secreted. It is found in the extracellular space. The protein resides in the extracellular matrix. The protein localises to the membrane. It localises to the nucleus. Its subcellular location is the cytoplasm. It is found in the mitochondrion. The enzyme catalyses Cleavage of gelatin type I and collagen types IV, V, VII, X. Cleaves the collagen-like sequence Pro-Gln-Gly-|-Ile-Ala-Gly-Gln.. In terms of biological role, ubiquitinous metalloproteinase that is involved in diverse functions such as remodeling of the vasculature, angiogenesis, tissue repair, tumor invasion, inflammation, and atherosclerotic plaque rupture. As well as degrading extracellular matrix proteins, can also act on several nonmatrix proteins such as big endothelial 1 and beta-type CGRP promoting vasoconstriction. Also cleaves KISS at a Gly-|-Leu bond. Appears to have a role in myocardial cell death pathways. Contributes to myocardial oxidative stress by regulating the activity of GSK3beta. Cleaves GSK3beta in vitro. Involved in the formation of the fibrovascular tissues. Functionally, PEX, the C-terminal non-catalytic fragment of MMP2, possesses anti-angiogenic and anti-tumor properties and inhibits cell migration and cell adhesion to FGF2 and vitronectin. Ligand for integrin alpha-v/beta-3 on the surface of blood vessels. Its function is as follows. Mediates the proteolysis of CHUK/IKKA and initiates a primary innate immune response by inducing mitochondrial-nuclear stress signaling with activation of the pro-inflammatory NF-kappaB, NFAT and IRF transcriptional pathways. This Mus musculus (Mouse) protein is 72 kDa type IV collagenase (Mmp2).